The chain runs to 356 residues: Protein-glutamate methylesterase/protein-glutamine glutaminase 2 (356 aa).

A Response regulatory domain is found at 4–121; it reads RALVVDDSAL…SQSMPEMAEE (118 aa). The residue at position 55 (D55) is a 4-aspartylphosphate. The CheB-type methylesterase domain occupies 161–356; the sequence is KAAPRNILAI…MAEEIIRIIG (196 aa). Active-site residues include S173, H200, and D300.

Belongs to the CheB family. In terms of processing, phosphorylated by CheA. Phosphorylation of the N-terminal regulatory domain activates the methylesterase activity.

The protein localises to the cytoplasm. The enzyme catalyses [protein]-L-glutamate 5-O-methyl ester + H2O = L-glutamyl-[protein] + methanol + H(+). The catalysed reaction is L-glutaminyl-[protein] + H2O = L-glutamyl-[protein] + NH4(+). Functionally, involved in chemotaxis. Part of a chemotaxis signal transduction system that modulates chemotaxis in response to various stimuli. Catalyzes the demethylation of specific methylglutamate residues introduced into the chemoreceptors (methyl-accepting chemotaxis proteins or MCP) by CheR. Also mediates the irreversible deamidation of specific glutamine residues to glutamic acid. The protein is Protein-glutamate methylesterase/protein-glutamine glutaminase 2 of Methanosarcina acetivorans (strain ATCC 35395 / DSM 2834 / JCM 12185 / C2A).